Consider the following 237-residue polypeptide: Proteasome subunit beta type-1-B (237 aa).

This sequence belongs to the peptidase T1B family. The 26S proteasome consists of a 20S proteasome core and two 19S regulatory subunits. The 20S proteasome core is composed of 28 subunits that are arranged in four stacked rings, resulting in a barrel-shaped structure. The two end rings are each formed by seven alpha subunits, and the two central rings are each formed by seven beta subunits. The catalytic chamber with the active sites is on the inside of the barrel.

The protein resides in the cytoplasm. It is found in the nucleus. In terms of biological role, non-catalytic component of the proteasome, a multicatalytic proteinase complex which is characterized by its ability to cleave peptides with Arg, Phe, Tyr, Leu, and Glu adjacent to the leaving group at neutral or slightly basic pH. The proteasome has an ATP-dependent proteolytic activity. The protein is Proteasome subunit beta type-1-B (psmb1-B) of Carassius auratus (Goldfish).